A 927-amino-acid polypeptide reads, in one-letter code: 2-oxoadipate dehydrogenase complex component E1 (927 aa).

Belongs to the alpha-ketoglutarate dehydrogenase family. The 2-oxoadipate dehydrogenase complex is composed of OADH (2-oxoadipate dehydrogenase; E1a), DLST (dihydrolipoamide succinyltransferase; E2) and DLD (dihydrolipoamide dehydrogenase; E3). E1a functional unit is a dimer. Thiamine diphosphate is required as a cofactor.

It is found in the mitochondrion. It catalyses the reaction N(6)-[(R)-lipoyl]-L-lysyl-[protein] + 2-oxoadipate + H(+) = N(6)-[(R)-S(8)-glutaryldihydrolipoyl]-L-lysyl-[protein] + CO2. Its pathway is amino-acid degradation. Functionally, 2-oxoadipate dehydrogenase (E1a) component of the 2-oxoadipate dehydrogenase complex (OADHC). Participates in the first step, rate limiting for the overall conversion of 2-oxoadipate (alpha-ketoadipate) to glutaryl-CoA and CO(2) catalyzed by the whole OADHC. Catalyzes the irreversible decarboxylation of 2-oxoadipate via the thiamine diphosphate (ThDP) cofactor and subsequent transfer of the decarboxylated acyl intermediate on an oxidized dihydrolipoyl group that is covalently amidated to the E2 enzyme (dihydrolipoyllysine-residue succinyltransferase or DLST). Can catalyze the decarboxylation of 2-oxoglutarate in vitro, but at a much lower rate than 2-oxoadipate. Responsible for the last step of L-lysine, L-hydroxylysine and L-tryptophan catabolism with the common product being 2-oxoadipate. The polypeptide is 2-oxoadipate dehydrogenase complex component E1 (dhtkd1) (Xenopus laevis (African clawed frog)).